The sequence spans 275 residues: Bis(5'-nucleosyl)-tetraphosphatase, symmetrical (275 aa).

Belongs to the Ap4A hydrolase family.

The catalysed reaction is P(1),P(4)-bis(5'-adenosyl) tetraphosphate + H2O = 2 ADP + 2 H(+). Functionally, hydrolyzes diadenosine 5',5'''-P1,P4-tetraphosphate to yield ADP. The polypeptide is Bis(5'-nucleosyl)-tetraphosphatase, symmetrical (Photorhabdus laumondii subsp. laumondii (strain DSM 15139 / CIP 105565 / TT01) (Photorhabdus luminescens subsp. laumondii)).